The chain runs to 155 residues: Small ribosomal subunit protein uS7 (155 aa).

It belongs to the universal ribosomal protein uS7 family. In terms of assembly, part of the 30S ribosomal subunit. Contacts proteins S9 and S11.

Functionally, one of the primary rRNA binding proteins, it binds directly to 16S rRNA where it nucleates assembly of the head domain of the 30S subunit. Is located at the subunit interface close to the decoding center, probably blocks exit of the E-site tRNA. The chain is Small ribosomal subunit protein uS7 from Chlorobium chlorochromatii (strain CaD3).